The primary structure comprises 466 residues: UDP-N-acetylmuramoylalanine--D-glutamate ligase (466 aa).

124-130 (GSDGKTT) lines the ATP pocket.

This sequence belongs to the MurCDEF family.

It is found in the cytoplasm. It catalyses the reaction UDP-N-acetyl-alpha-D-muramoyl-L-alanine + D-glutamate + ATP = UDP-N-acetyl-alpha-D-muramoyl-L-alanyl-D-glutamate + ADP + phosphate + H(+). It participates in cell wall biogenesis; peptidoglycan biosynthesis. Its function is as follows. Cell wall formation. Catalyzes the addition of glutamate to the nucleotide precursor UDP-N-acetylmuramoyl-L-alanine (UMA). This is UDP-N-acetylmuramoylalanine--D-glutamate ligase from Acetivibrio thermocellus (strain ATCC 27405 / DSM 1237 / JCM 9322 / NBRC 103400 / NCIMB 10682 / NRRL B-4536 / VPI 7372) (Clostridium thermocellum).